We begin with the raw amino-acid sequence, 426 residues long: Mitogen-activated protein kinase 8 (426 aa).

Residues 26 to 321 (YQNLKPIGSG…VDDALQHPYI (296 aa)) enclose the Protein kinase domain. ATP-binding positions include 33–38 (GSGAQG) and K55. Catalysis depends on D151, which acts as the Proton acceptor. Residue T183 is modified to Phosphothreonine. Positions 183-185 (TPY) match the TXY motif. Phosphotyrosine is present on Y185. The disordered stretch occupies residues 375 to 426 (QPAPLGAAVTDGSQAHTSSSSGDASSMSTDPTLPSDTDSSLETSAGTLGCCR). Low complexity predominate over residues 384–404 (TDGSQAHTSSSSGDASSMSTD). Positions 405–420 (PTLPSDTDSSLETSAG) are enriched in polar residues.

This sequence belongs to the protein kinase superfamily. CMGC Ser/Thr protein kinase family. MAP kinase subfamily. Mg(2+) is required as a cofactor. Post-translationally, dually phosphorylated on Thr-183 and Tyr-185, which activates the enzyme. In terms of tissue distribution, strongly expressed in presumptive ectoderm and mesoderm regions and weakly expressed in endoderm regions during early stages of embryo development. Expressed in the head and dorsal regions during neurula and tailbud stages.

The protein localises to the cytoplasm. The protein resides in the nucleus. Its subcellular location is the synapse. The catalysed reaction is L-seryl-[protein] + ATP = O-phospho-L-seryl-[protein] + ADP + H(+). The enzyme catalyses L-threonyl-[protein] + ATP = O-phospho-L-threonyl-[protein] + ADP + H(+). Activated by threonine and tyrosine phosphorylation, potentially by the dual-specificity kinase, MKK7. Indirectly activated by Wnt5a. Functionally, responds to activation by environmental stress and pro-inflammatory cytokines by phosphorylating a number of transcription factors, and thus regulating transcriptional activity. Regulates morphogenic cell movements, controlling convergent extension during gastrulation. May play a role in the regulation of the circadian clock. The chain is Mitogen-activated protein kinase 8 (mapk8) from Xenopus laevis (African clawed frog).